The primary structure comprises 141 residues: Large ribosomal subunit protein uL11 (141 aa).

The protein belongs to the universal ribosomal protein uL11 family. Part of the ribosomal stalk of the 50S ribosomal subunit. Interacts with L10 and the large rRNA to form the base of the stalk. L10 forms an elongated spine to which L12 dimers bind in a sequential fashion forming a multimeric L10(L12)X complex. One or more lysine residues are methylated.

In terms of biological role, forms part of the ribosomal stalk which helps the ribosome interact with GTP-bound translation factors. This is Large ribosomal subunit protein uL11 from Nitratiruptor sp. (strain SB155-2).